Reading from the N-terminus, the 146-residue chain is Prolactin-inducible protein homolog (146 aa).

The first 28 residues, 1–28 (MLTFQFLFRASPATLLLTLYLQLGVITA), serve as a signal peptide directing secretion. Residue glutamine 29 is modified to Pyrrolidone carboxylic acid. 2 cysteine pairs are disulfide-bonded: cysteine 65–cysteine 91 and cysteine 89–cysteine 123. Asparagine 105 carries N-linked (GlcNAc...) asparagine glycosylation.

The protein belongs to the PIP family. Monomer. Interacts with AZGP1.

The protein localises to the secreted. The sequence is that of Prolactin-inducible protein homolog (PIP) from Cavia porcellus (Guinea pig).